Reading from the N-terminus, the 681-residue chain is DNA ligase (681 aa).

NAD(+)-binding positions include 45-49 (DFDFD), 94-95 (SL), and glutamate 120. Catalysis depends on lysine 122, which acts as the N6-AMP-lysine intermediate. Residues arginine 143, glutamate 177, lysine 289, and lysine 313 each contribute to the NAD(+) site. Zn(2+)-binding residues include cysteine 403, cysteine 406, cysteine 421, and cysteine 426. The 89-residue stretch at 593–681 (ADQQPFAGQS…SLKIDFKNLI (89 aa)) folds into the BRCT domain.

This sequence belongs to the NAD-dependent DNA ligase family. LigA subfamily. Mg(2+) is required as a cofactor. The cofactor is Mn(2+).

It carries out the reaction NAD(+) + (deoxyribonucleotide)n-3'-hydroxyl + 5'-phospho-(deoxyribonucleotide)m = (deoxyribonucleotide)n+m + AMP + beta-nicotinamide D-nucleotide.. Its function is as follows. DNA ligase that catalyzes the formation of phosphodiester linkages between 5'-phosphoryl and 3'-hydroxyl groups in double-stranded DNA using NAD as a coenzyme and as the energy source for the reaction. It is essential for DNA replication and repair of damaged DNA. In Leptospira interrogans serogroup Icterohaemorrhagiae serovar Lai (strain 56601), this protein is DNA ligase.